Reading from the N-terminus, the 271-residue chain is Aminoglycoside 3'-phosphotransferase (271 aa).

Aspartate 198 (proton acceptor) is an active-site residue.

It belongs to the aminoglycoside phosphotransferase family.

The enzyme catalyses kanamycin A + ATP = kanamycin 3'-phosphate + ADP + H(+). Functionally, resistance to kanamycin and structurally-related aminoglycosides, including amikacin. In Salmonella typhimurium, this protein is Aminoglycoside 3'-phosphotransferase.